Reading from the N-terminus, the 159-residue chain is Large ribosomal subunit protein bL35c (159 aa).

The transit peptide at 1–86 (MAMASATATL…TSSPSFTVFA (86 aa)) directs the protein to the chloroplast.

As to quaternary structure, component of the chloroplast large ribosomal subunit (LSU). Mature 70S chloroplast ribosomes of higher plants consist of a small (30S) and a large (50S) subunit. The 30S small subunit contains 1 molecule of ribosomal RNA (16S rRNA) and 24 different proteins. The 50S large subunit contains 3 rRNA molecules (23S, 5S and 4.5S rRNA) and 33 different proteins.

It is found in the plastid. The protein localises to the chloroplast. In terms of biological role, component of the chloroplast ribosome (chloro-ribosome), a dedicated translation machinery responsible for the synthesis of chloroplast genome-encoded proteins, including proteins of the transcription and translation machinery and components of the photosynthetic apparatus. This chain is Large ribosomal subunit protein bL35c (RPL35), found in Spinacia oleracea (Spinach).